The sequence spans 616 residues: Dihydroxy-acid dehydratase (616 aa).

Asp81 lines the Mg(2+) pocket. Residue Cys122 coordinates [2Fe-2S] cluster. Asp123 and Lys124 together coordinate Mg(2+). An N6-carboxylysine modification is found at Lys124. Residue Cys195 coordinates [2Fe-2S] cluster. Position 491 (Glu491) interacts with Mg(2+). Residue Ser517 is the Proton acceptor of the active site.

This sequence belongs to the IlvD/Edd family. As to quaternary structure, homodimer. Requires [2Fe-2S] cluster as cofactor. Mg(2+) serves as cofactor.

It catalyses the reaction (2R)-2,3-dihydroxy-3-methylbutanoate = 3-methyl-2-oxobutanoate + H2O. It carries out the reaction (2R,3R)-2,3-dihydroxy-3-methylpentanoate = (S)-3-methyl-2-oxopentanoate + H2O. It functions in the pathway amino-acid biosynthesis; L-isoleucine biosynthesis; L-isoleucine from 2-oxobutanoate: step 3/4. Its pathway is amino-acid biosynthesis; L-valine biosynthesis; L-valine from pyruvate: step 3/4. Functions in the biosynthesis of branched-chain amino acids. Catalyzes the dehydration of (2R,3R)-2,3-dihydroxy-3-methylpentanoate (2,3-dihydroxy-3-methylvalerate) into 2-oxo-3-methylpentanoate (2-oxo-3-methylvalerate) and of (2R)-2,3-dihydroxy-3-methylbutanoate (2,3-dihydroxyisovalerate) into 2-oxo-3-methylbutanoate (2-oxoisovalerate), the penultimate precursor to L-isoleucine and L-valine, respectively. This Escherichia coli O9:H4 (strain HS) protein is Dihydroxy-acid dehydratase.